A 158-amino-acid chain; its full sequence is UPF0266 membrane protein YobD (158 aa).

The next 3 membrane-spanning stretches (helical) occupy residues 6–26, 45–65, and 67–87; these read LVLILFIAALLAFAIYDQFIM, IDSVIFVGLIVILIYNNVTNH, and ALITTWLLSALALMGFYIFWI.

This sequence belongs to the UPF0266 family.

Its subcellular location is the cell inner membrane. The sequence is that of UPF0266 membrane protein YobD from Shigella boydii serotype 4 (strain Sb227).